The following is a 342-amino-acid chain: Uroporphyrinogen decarboxylase (342 aa).

Residues 24–28, D74, Y149, S204, and H319 contribute to the substrate site; that span reads RQAGR.

Belongs to the uroporphyrinogen decarboxylase family. Homodimer.

Its subcellular location is the cytoplasm. It carries out the reaction uroporphyrinogen III + 4 H(+) = coproporphyrinogen III + 4 CO2. The protein operates within porphyrin-containing compound metabolism; protoporphyrin-IX biosynthesis; coproporphyrinogen-III from 5-aminolevulinate: step 4/4. Functionally, catalyzes the decarboxylation of four acetate groups of uroporphyrinogen-III to yield coproporphyrinogen-III. This is Uroporphyrinogen decarboxylase from Chelativorans sp. (strain BNC1).